A 375-amino-acid polypeptide reads, in one-letter code: Nucleosome assembly protein 1-like 4 (375 aa).

The interval 1-28 (MAENSLSDGGPADSVEAAKNASNTEKLT) is disordered. Alanine 2 is modified (N-acetylalanine). Serine 5, serine 7, and serine 49 each carry phosphoserine. Threonine 51 carries the phosphothreonine modification. Phosphoserine is present on residues serine 53 and serine 54. At threonine 58 the chain carries Phosphothreonine. Lysine 105 is subject to N6-acetyllysine. Residue serine 125 is modified to Phosphoserine. At lysine 146 the chain carries N6-acetyllysine. The short motif at 265-271 (IKKKQKH) is the Nuclear localization signal element. Serine 304 bears the Phosphoserine mark. The tract at residues 339–375 (AIEDDDNFEEGEEGEEEELEGDEEGEDEDDADVNPKV) is disordered.

The protein belongs to the nucleosome assembly protein (NAP) family. As to quaternary structure, interacts with core (H2A, H2B, H3, H4) and linker (H1) histones. Post-translationally, polyglutamylated and polyglycylated. These 2 modifications occur exclusively on glutamate residues and result in either polyglutamate or polyglycine chains on the gamma-carboxyl group. Both modifications can coexist on the same protein on adjacent residues, and lowering polyglycylation levels increases polyglutamylation, and reciprocally. Polyglutamylated by TTLL4. Phosphorylated at the G0/G1 boundary but it is not phosphorylated in S-phase. Phosphorylated protein remains in the cytoplasm in a complex with histones during the G0/G1 transition, whereas dephosphorylation triggers its transport into the nucleus at the G1/S-boundary.

Its subcellular location is the nucleus. It localises to the cytoplasm. Acts as a histone chaperone in nucleosome assembly. In condensing spermatids, mediates the loading of the heterodimer composed of histones H2AB1 and H2BC1/TH2B onto the nucleosomes, thereby promoting the replacement of histones to protamine in male germ cells. This Mus musculus (Mouse) protein is Nucleosome assembly protein 1-like 4 (Nap1l4).